Reading from the N-terminus, the 452-residue chain is Phosphoglucosamine mutase (452 aa).

The active-site Phosphoserine intermediate is serine 108. Mg(2+)-binding residues include serine 108, aspartate 247, aspartate 249, and aspartate 251. Serine 108 is modified (phosphoserine).

Belongs to the phosphohexose mutase family. Requires Mg(2+) as cofactor. Activated by phosphorylation.

It carries out the reaction alpha-D-glucosamine 1-phosphate = D-glucosamine 6-phosphate. Functionally, catalyzes the conversion of glucosamine-6-phosphate to glucosamine-1-phosphate. This is Phosphoglucosamine mutase from Burkholderia mallei (strain NCTC 10247).